The following is a 2431-amino-acid chain: Reducing polyketide synthase rads1 (2431 aa).

Residues 10 to 440 (RAPIAIIGLA…GTNAHIVLER (431 aa)) form the Ketosynthase family 3 (KS3) domain. Residues C184, H319, and H363 each act as for beta-ketoacyl synthase activity in the active site. The malonyl-CoA:ACP transacylase (MAT) domain stretch occupies residues 558-895 (FVFTGQGAQW…NLAAELFRRG (338 aa)). The tract at residues 944-1080 (KSILGAELPS…GLISIAYEDT (137 aa)) is N-terminal hotdog fold. The PKS/mFAS DH domain occupies 944–1267 (KSILGAELPS…LAELEVDDAA (324 aa)). Residues 946 to 1264 (ILGAELPSMD…DFRLAELEVD (319 aa)) form a dehydratase (DH) domain region. H976 functions as the Proton acceptor; for dehydratase activity in the catalytic mechanism. A C-terminal hotdog fold region spans residues 1108 to 1267 (PETCSKERFY…LAELEVDDAA (160 aa)). D1174 acts as the Proton donor; for dehydratase activity in catalysis. An enoyl reductase (ER) domain region spans residues 1705–2023 (GLLNTLHFVP…QGKHLGKMIL (319 aa)). The active-site Phosphocysteine intermediate is the C1822. A ketoreductase (KR) domain region spans residues 2048 to 2228 (ATYLIVGGLG…VSVNLGIMRD (181 aa)). The region spanning 2346–2423 (VAAAIITEAL…TFAVQIAKKS (78 aa)) is the Carrier domain. S2383 carries the O-(pantetheine 4'-phosphoryl)serine modification.

The protein operates within secondary metabolite biosynthesis. In terms of biological role, reducing polyketide synthase; part of the gene cluster that mediates the biosynthesis of radicicol, a resorcylic acid lactone (RAL) that irreversibly inhibits the HSP90 molecular chaperone, an important target for cancer chemotherapy. The cluster encodes only two apparent post-PKS enzymes, a cytochrome P450 monooxygenase (radP) and a non-heme halogenase (radH) that introduce the epoxide and the chlorine, respectively. If this cluster includes all the genes required for radicicol biosynthesis, the remaining structural features of radicicol are presumably generated by the PKSs rads1 and rads2. The C-2' ketone could arise if the R-PKS rads1 and NR-PKS rads2 each carry out four iterations, in contrast to the five iteration-three iteration split for the hypothemycin PKSs. The origin of the cis 5',6' double bond is not known. The radicicol R-PKS radS1 ER domain may catalyze either double bond isomerization or reduction in the third iteration. The chain is Reducing polyketide synthase rads1 from Floropilus chiversii (Chaetomium chiversii).